The following is a 227-amino-acid chain: PKHD-type hydroxylase Bcep18194_B0892 (227 aa).

One can recognise a Fe2OG dioxygenase domain in the interval 78–178 (KVFPPLFNRY…RVASFFWIQS (101 aa)). Residues His-96, Asp-98, and His-159 each contribute to the Fe cation site. 2-oxoglutarate is bound at residue Arg-169.

Fe(2+) serves as cofactor. L-ascorbate is required as a cofactor.

This Burkholderia lata (strain ATCC 17760 / DSM 23089 / LMG 22485 / NCIMB 9086 / R18194 / 383) protein is PKHD-type hydroxylase Bcep18194_B0892.